The sequence spans 344 residues: Meiotic recombination protein DMC1 homolog (344 aa).

A disordered region spans residues 1–22 (MMASLKAEETSQMQLVEREEND). 133-140 (GEFRSGKT) is an ATP binding site. Position 235 (Arg-235) interacts with dsDNA. SsDNA-binding residues include Arg-235, Phe-238, Arg-241, Arg-247, and Arg-315. 2 residues coordinate dsDNA: Arg-241 and Arg-247.

This sequence belongs to the RecA family. DMC1 subfamily. In terms of assembly, double stacked ring-shaped homooctamer. Interacts with BRCA2A and BRCA2B. As to expression, expressed in mitotic and/or meiotic tissues. Expressed in roots, leaves and anthers and carpels of young fower buds.

It is found in the nucleus. In terms of biological role, may participate in meiotic recombination, specifically in homologous strand assimilation, which is required for the resolution of meiotic double-strand breaks. Mediates interhomolog recombination during meiosis. The sequence is that of Meiotic recombination protein DMC1 homolog from Arabidopsis thaliana (Mouse-ear cress).